We begin with the raw amino-acid sequence, 207 residues long: Peptidyl-prolyl cis-trans isomerase FKBP16-1, chloroplastic (207 aa).

One can recognise a PPIase FKBP-type domain in the interval 104–207; it reads GDLVELNYVC…VFEIQLLKVL (104 aa).

This sequence belongs to the FKBP-type PPIase family.

It is found in the plastid. The protein localises to the chloroplast thylakoid lumen. The catalysed reaction is [protein]-peptidylproline (omega=180) = [protein]-peptidylproline (omega=0). PPIases accelerate the folding of proteins. It catalyzes the cis-trans isomerization of proline imidic peptide bonds in oligopeptides. The polypeptide is Peptidyl-prolyl cis-trans isomerase FKBP16-1, chloroplastic (FKBP16-1) (Arabidopsis thaliana (Mouse-ear cress)).